A 157-amino-acid polypeptide reads, in one-letter code: Protein AE7 (157 aa).

The protein belongs to the MIP18 family. In terms of assembly, part of a complex formed of AE7, CIA1, MMS19 and NAR1. Interacts with CIA1 and MMS19, but not with NAR1. As to expression, expressed in the embryo, shoot apical meristem, leaf primordia, inflorescence and all floral organs.

The protein localises to the nucleus. It localises to the cytoplasm. Central member of the cytosolic iron-sulfur (Fe-S) protein assembly (CIA) pathway. Involved in leaf polarity formation. Promotes leaf adaxial identity. May play a role in the cell cycle progression and is required for cell proliferation. The chain is Protein AE7 from Arabidopsis thaliana (Mouse-ear cress).